The primary structure comprises 245 residues: NADH-quinone oxidoreductase subunit C (245 aa).

A compositionally biased stretch (basic and acidic residues) spans 1 to 10 (MSAPQDRTDD). 2 disordered regions span residues 1 to 54 (MSAP…GYGG) and 216 to 245 (PQRKDYPLGGVPVEYKGAEIPPPDRRRSYQ). The span at 11 to 28 (GGVPVPVTPAGATGGAPA) shows a compositional bias: low complexity. Residues 39-54 (GMFGDQGTGDVSGYGG) show a composition bias toward gly residues.

This sequence belongs to the complex I 30 kDa subunit family. NDH-1 is composed of 14 different subunits. Subunits NuoB, C, D, E, F, and G constitute the peripheral sector of the complex.

Its subcellular location is the cell membrane. The catalysed reaction is a quinone + NADH + 5 H(+)(in) = a quinol + NAD(+) + 4 H(+)(out). NDH-1 shuttles electrons from NADH, via FMN and iron-sulfur (Fe-S) centers, to quinones in the respiratory chain. The immediate electron acceptor for the enzyme in this species is believed to be a menaquinone. Couples the redox reaction to proton translocation (for every two electrons transferred, four hydrogen ions are translocated across the cytoplasmic membrane), and thus conserves the redox energy in a proton gradient. This chain is NADH-quinone oxidoreductase subunit C, found in Salinispora tropica (strain ATCC BAA-916 / DSM 44818 / JCM 13857 / NBRC 105044 / CNB-440).